The following is a 429-amino-acid chain: Arginine biosynthesis bifunctional protein ArgJ (429 aa).

Substrate-binding residues include Thr181, Lys207, Thr218, Glu302, Asn424, and Ser429. The Nucleophile role is filled by Thr218.

The protein belongs to the ArgJ family. As to quaternary structure, heterotetramer of two alpha and two beta chains.

It localises to the cytoplasm. The enzyme catalyses N(2)-acetyl-L-ornithine + L-glutamate = N-acetyl-L-glutamate + L-ornithine. It carries out the reaction L-glutamate + acetyl-CoA = N-acetyl-L-glutamate + CoA + H(+). It functions in the pathway amino-acid biosynthesis; L-arginine biosynthesis; L-ornithine and N-acetyl-L-glutamate from L-glutamate and N(2)-acetyl-L-ornithine (cyclic): step 1/1. The protein operates within amino-acid biosynthesis; L-arginine biosynthesis; N(2)-acetyl-L-ornithine from L-glutamate: step 1/4. Functionally, catalyzes two activities which are involved in the cyclic version of arginine biosynthesis: the synthesis of N-acetylglutamate from glutamate and acetyl-CoA as the acetyl donor, and of ornithine by transacetylation between N(2)-acetylornithine and glutamate. This chain is Arginine biosynthesis bifunctional protein ArgJ, found in Chlorobium chlorochromatii (strain CaD3).